The primary structure comprises 357 residues: Protein RecA (357 aa).

An ATP-binding site is contributed by 73–80 (GPESSGKT).

This sequence belongs to the RecA family.

Its subcellular location is the cytoplasm. In terms of biological role, can catalyze the hydrolysis of ATP in the presence of single-stranded DNA, the ATP-dependent uptake of single-stranded DNA by duplex DNA, and the ATP-dependent hybridization of homologous single-stranded DNAs. It interacts with LexA causing its activation and leading to its autocatalytic cleavage. This Methylibium petroleiphilum (strain ATCC BAA-1232 / LMG 22953 / PM1) protein is Protein RecA.